A 186-amino-acid polypeptide reads, in one-letter code: Elongation factor P (186 aa).

Belongs to the elongation factor P family.

The protein localises to the cytoplasm. It participates in protein biosynthesis; polypeptide chain elongation. In terms of biological role, involved in peptide bond synthesis. Stimulates efficient translation and peptide-bond synthesis on native or reconstituted 70S ribosomes in vitro. Probably functions indirectly by altering the affinity of the ribosome for aminoacyl-tRNA, thus increasing their reactivity as acceptors for peptidyl transferase. This chain is Elongation factor P, found in Acidobacterium capsulatum (strain ATCC 51196 / DSM 11244 / BCRC 80197 / JCM 7670 / NBRC 15755 / NCIMB 13165 / 161).